The following is a 1399-amino-acid chain: DNA-directed RNA polymerase subunit beta' (1399 aa).

Cys71, Cys73, Cys86, and Cys89 together coordinate Zn(2+). Positions 462, 464, and 466 each coordinate Mg(2+). Zn(2+) contacts are provided by Cys810, Cys884, Cys891, and Cys894. The disordered stretch occupies residues 1379–1399 (KQAAIVPSQPEPQPLALPPAE). Residues 1387 to 1399 (QPEPQPLALPPAE) are compositionally biased toward pro residues.

It belongs to the RNA polymerase beta' chain family. The RNAP catalytic core consists of 2 alpha, 1 beta, 1 beta' and 1 omega subunit. When a sigma factor is associated with the core the holoenzyme is formed, which can initiate transcription. Mg(2+) is required as a cofactor. Zn(2+) serves as cofactor.

The enzyme catalyses RNA(n) + a ribonucleoside 5'-triphosphate = RNA(n+1) + diphosphate. In terms of biological role, DNA-dependent RNA polymerase catalyzes the transcription of DNA into RNA using the four ribonucleoside triphosphates as substrates. The sequence is that of DNA-directed RNA polymerase subunit beta' from Bradyrhizobium sp. (strain ORS 278).